A 212-amino-acid polypeptide reads, in one-letter code: ATP-dependent dethiobiotin synthetase BioD (212 aa).

13-18 (GIGKTV) is an ATP binding site. Residue Thr-17 participates in Mg(2+) binding. The active site involves Lys-33. Ser-37 contributes to the substrate binding site. Residue Glu-100 coordinates Mg(2+). Residues 100–103 (EGAG) and 184–186 (PRL) contribute to the ATP site.

The protein belongs to the dethiobiotin synthetase family. Homodimer. Requires Mg(2+) as cofactor.

It is found in the cytoplasm. The catalysed reaction is (7R,8S)-7,8-diammoniononanoate + CO2 + ATP = (4R,5S)-dethiobiotin + ADP + phosphate + 3 H(+). The protein operates within cofactor biosynthesis; biotin biosynthesis; biotin from 7,8-diaminononanoate: step 1/2. Functionally, catalyzes a mechanistically unusual reaction, the ATP-dependent insertion of CO2 between the N7 and N8 nitrogen atoms of 7,8-diaminopelargonic acid (DAPA, also called 7,8-diammoniononanoate) to form a ureido ring. The sequence is that of ATP-dependent dethiobiotin synthetase BioD from Brucella anthropi (strain ATCC 49188 / DSM 6882 / CCUG 24695 / JCM 21032 / LMG 3331 / NBRC 15819 / NCTC 12168 / Alc 37) (Ochrobactrum anthropi).